The primary structure comprises 347 residues: Phenylalanine--tRNA ligase alpha subunit (347 aa).

Glutamate 265 contacts Mg(2+).

It belongs to the class-II aminoacyl-tRNA synthetase family. Phe-tRNA synthetase alpha subunit type 1 subfamily. As to quaternary structure, tetramer of two alpha and two beta subunits. It depends on Mg(2+) as a cofactor.

Its subcellular location is the cytoplasm. The catalysed reaction is tRNA(Phe) + L-phenylalanine + ATP = L-phenylalanyl-tRNA(Phe) + AMP + diphosphate + H(+). The protein is Phenylalanine--tRNA ligase alpha subunit of Wolbachia pipientis subsp. Culex pipiens (strain wPip).